Here is a 345-residue protein sequence, read N- to C-terminus: Aurora kinase B (345 aa).

The interval 1 to 25 (MAQKENAYPWPYGSKTSQSGLNTLS) is disordered. Polar residues predominate over residues 14–25 (SKTSQSGLNTLS). A Phosphothreonine modification is found at Thr35. The interval 50–77 (TAAPGQKLAENKSQGSTASQGSQNKQPF) is disordered. Residues 60 to 77 (NKSQGSTASQGSQNKQPF) are compositionally biased toward polar residues. Ser62 bears the Phosphoserine mark. One can recognise a Protein kinase domain in the interval 82 to 332 (FEIGRPLGKG…LAEVAAHPWV (251 aa)). ATP is bound by residues 88–96 (LGKGKFGNV) and Lys111. The Proton acceptor role is filled by Asp205. Lys220 bears the N6-acetyllysine mark. Ser232 bears the Phosphoserine mark. A Phosphothreonine; by autocatalysis modification is found at Thr237.

Belongs to the protein kinase superfamily. Ser/Thr protein kinase family. Aurora subfamily. In terms of assembly, component of the chromosomal passenger complex (CPC) composed of at least BIRC5/survivin, CDCA8/borealin, INCENP, AURKB or AURKC; predominantly independent AURKB- and AURKC-containing complexes exist. Associates with RACGAP1 during M phase. Interacts with SPDYC; this interaction may be required for proper localization of active, Thr-237-phosphorylated AURKB form during prometaphase and metaphase. Interacts with p53/TP53. Interacts (via the middle kinase domain) with NOC2L (via the N- and C-terminus domains). Interacts with CDCA1. Interacts with EVI5. Interacts with JTB. Interacts with NDC80. Interacts with PSMA3. Interacts with RNF2/RING1B. Interacts with SEPTIN1. Interacts with SIRT2. Interacts with TACC1. Interacts with TTC28. The phosphorylation of Thr-237 requires the binding to INCENP and occurs by means of an autophosphorylation mechanism. Thr-237 phosphorylation is indispensable for the AURKB kinase activity. Post-translationally, acetylated at Lys-220 by KAT5 at kinetochores, increasing AURKB activity and promoting accurate chromosome segregation in mitosis. In terms of processing, ubiquitinated by different BCR (BTB-CUL3-RBX1) E3 ubiquitin ligase complexes. Ubiquitinated by the BCR(KLHL9-KLHL13) E3 ubiquitin ligase complex, ubiquitination leads to removal from mitotic chromosomes and is required for cytokinesis. During anaphase, the BCR(KLHL21) E3 ubiquitin ligase complex recruits the CPC complex from chromosomes to the spindle midzone and mediates the ubiquitination of AURKB. Ubiquitination of AURKB by BCR(KLHL21) E3 ubiquitin ligase complex may not lead to its degradation by the proteasome. Deubiquitinated by USP35; inhibiting CDH1-mediated degradation of AURKB. In terms of tissue distribution, expressed in testis, intestine and spleen. All of them are tissues that contain a large number of proliferating cells. Expressed during S phase, in a cell-cycle-dependent fashion.

The protein resides in the nucleus. The protein localises to the chromosome. It localises to the centromere. It is found in the kinetochore. Its subcellular location is the cytoplasm. The protein resides in the cytoskeleton. The protein localises to the spindle. It localises to the midbody. The catalysed reaction is L-seryl-[protein] + ATP = O-phospho-L-seryl-[protein] + ADP + H(+). The enzyme catalyses L-threonyl-[protein] + ATP = O-phospho-L-threonyl-[protein] + ADP + H(+). Its activity is regulated as follows. Activity is greatly increased when AURKB is within the CPC complex. In particular, AURKB-phosphorylated INCENP acts as an activator of AURKB. Positive feedback between HASPIN and AURKB contributes to CPC localization. Functionally, serine/threonine-protein kinase component of the chromosomal passenger complex (CPC), a complex that acts as a key regulator of mitosis. The CPC complex has essential functions at the centromere in ensuring correct chromosome alignment and segregation and is required for chromatin-induced microtubule stabilization and spindle assembly. Involved in the bipolar attachment of spindle microtubules to kinetochores and is a key regulator for the onset of cytokinesis during mitosis. Required for central/midzone spindle assembly and cleavage furrow formation. Key component of the cytokinesis checkpoint, a process required to delay abscission to prevent both premature resolution of intercellular chromosome bridges and accumulation of DNA damage: phosphorylates CHMP4C, leading to retain abscission-competent VPS4 (VPS4A and/or VPS4B) at the midbody ring until abscission checkpoint signaling is terminated at late cytokinesis. AURKB phosphorylates the CPC complex subunits BIRC5/survivin, CDCA8/borealin and INCENP. Phosphorylation of INCENP leads to increased AURKB activity. Other known AURKB substrates involved in centromeric functions and mitosis are CENPA, DES/desmin, GPAF, KIF2C, NSUN2, RACGAP1, SEPTIN1, VIM/vimentin, HASPIN, and histone H3. A positive feedback loop involving HASPIN and AURKB contributes to localization of CPC to centromeres. Phosphorylation of VIM controls vimentin filament segregation in cytokinetic process, whereas histone H3 is phosphorylated at 'Ser-10' and 'Ser-28' during mitosis (H3S10ph and H3S28ph, respectively). AURKB is also required for kinetochore localization of BUB1 and SGO1. Phosphorylation of p53/TP53 negatively regulates its transcriptional activity. Key regulator of active promoters in resting B- and T-lymphocytes: acts by mediating phosphorylation of H3S28ph at active promoters in resting B-cells, inhibiting RNF2/RING1B-mediated ubiquitination of histone H2A and enhancing binding and activity of the USP16 deubiquitinase at transcribed genes. Acts as an inhibitor of CGAS during mitosis: catalyzes phosphorylation of the N-terminus of CGAS during the G2-M transition, blocking CGAS liquid phase separation and activation, and thereby preventing CGAS-induced autoimmunity. Phosphorylates KRT5 during anaphase and telophase. Phosphorylates ATXN10 which promotes phosphorylation of ATXN10 by PLK1 and may play a role in the regulation of cytokinesis and stimulating the proteasomal degradation of ATXN10. The polypeptide is Aurora kinase B (Aurkb) (Mus musculus (Mouse)).